A 193-amino-acid chain; its full sequence is Ion-translocating oxidoreductase complex subunit A (193 aa).

6 helical membrane-spanning segments follow: residues 5-25, 39-59, 67-87, 102-122, 134-154, and 171-191; these read LLLL…FLGL, IGMG…AYLV, LGIE…VVQF, LLGI…VALL, IIYG…FASM, and SIAM…TGLV.

Belongs to the NqrDE/RnfAE family. In terms of assembly, the complex is composed of six subunits: RnfA, RnfB, RnfC, RnfD, RnfE and RnfG.

Its subcellular location is the cell inner membrane. Its function is as follows. Part of a membrane-bound complex that couples electron transfer with translocation of ions across the membrane. This chain is Ion-translocating oxidoreductase complex subunit A, found in Vibrio cholerae serotype O1 (strain ATCC 39315 / El Tor Inaba N16961).